A 335-amino-acid chain; its full sequence is MKFVDSAKISVKAGDGGRGCVSFRREKFVPKGGPDGGDGGRGGHVYLRANKQLTTLLDFKYRKSYIAGRGGHGLGARKSGKDGKDVIIGVPCGTVVRNVETGEVICDMVEDGQEIMIAKGGRGGWGNQHFATATRQAPRFAQPGEPGEEYELEMELKLMADVGLVGFPNAGKSTLISVLSAARPKIADYPFTTLVPNLGIVRYEDYKSFVMADIPGIIEGAAEGRGLGIQFLRHIERTKTLLIMVPSNTEDIAAEYATLLKELEKFDPSLLSKPRLVVITKMDIAPEDFTMPELEKGVKVLAISSVAGQGLKALKDELWRQVSLQNQSPSEHAGS.

The region spanning 1–159 (MKFVDSAKIS…YELEMELKLM (159 aa)) is the Obg domain. The OBG-type G domain occupies 160 to 323 (ADVGLVGFPN…LKDELWRQVS (164 aa)). Residues 166–173 (GFPNAGKS), 191–195 (FTTLV), 213–216 (DIPG), 280–283 (TKMD), and 304–306 (SSV) each bind GTP. Positions 173 and 193 each coordinate Mg(2+).

The protein belongs to the TRAFAC class OBG-HflX-like GTPase superfamily. OBG GTPase family. Monomer. Mg(2+) is required as a cofactor.

Its subcellular location is the cytoplasm. In terms of biological role, an essential GTPase which binds GTP, GDP and possibly (p)ppGpp with moderate affinity, with high nucleotide exchange rates and a fairly low GTP hydrolysis rate. Plays a role in control of the cell cycle, stress response, ribosome biogenesis and in those bacteria that undergo differentiation, in morphogenesis control. This Chlorobaculum tepidum (strain ATCC 49652 / DSM 12025 / NBRC 103806 / TLS) (Chlorobium tepidum) protein is GTPase Obg.